Here is a 318-residue protein sequence, read N- to C-terminus: Peroxisomal and mitochondrial division factor 1 (318 aa).

The tract at residues 1-39 is disordered; that stretch reads MADVEDRAAKGISDYDQGGVKTTELERKIEDMENKNQEL. Topologically, residues 1 to 291 are cytoplasmic; the sequence is MADVEDRAAK…QKGSLEAEYQ (291 aa). Residues 19 to 260 are a coiled coil; the sequence is GVKTTELERK…KKVEEGNKTV (242 aa). Residues 23 to 39 are compositionally biased toward basic and acidic residues; that stretch reads TELERKIEDMENKNQEL. Residues 292 to 312 form a helical membrane-spanning segment; sequence WPVVAAGSVGAAGLVAATFFV. Over 313–318 the chain is Mitochondrial intermembrane; the sequence is CYSKLR.

Homodimer. Interacts with PMD2.

It localises to the peroxisome membrane. The protein localises to the mitochondrion outer membrane. Involved in morphogenesis and proliferation of peroxisomes and mitochondria, independently from the previously defined pathway controlled by the FIS1-DRP3 complex. In Arabidopsis thaliana (Mouse-ear cress), this protein is Peroxisomal and mitochondrial division factor 1.